The sequence spans 329 residues: GTP 3',8-cyclase (329 aa).

Residues 8-229 form the Radical SAM core domain; the sequence is AFARTFYYLR…AGWQRRLPGR (222 aa). Residue Arg-17 participates in GTP binding. [4Fe-4S] cluster contacts are provided by Cys-24 and Cys-28. Tyr-30 is a binding site for S-adenosyl-L-methionine. Cys-31 contributes to the [4Fe-4S] cluster binding site. Arg-68 lines the GTP pocket. Residue Gly-72 coordinates S-adenosyl-L-methionine. Position 99 (Thr-99) interacts with GTP. Ser-123 provides a ligand contact to S-adenosyl-L-methionine. A GTP-binding site is contributed by Lys-160. An S-adenosyl-L-methionine-binding site is contributed by Met-194. Positions 257 and 260 each coordinate [4Fe-4S] cluster. 262–264 contacts GTP; the sequence is RLR. Position 274 (Cys-274) interacts with [4Fe-4S] cluster.

Belongs to the radical SAM superfamily. MoaA family. In terms of assembly, monomer and homodimer. It depends on [4Fe-4S] cluster as a cofactor.

It catalyses the reaction GTP + AH2 + S-adenosyl-L-methionine = (8S)-3',8-cyclo-7,8-dihydroguanosine 5'-triphosphate + 5'-deoxyadenosine + L-methionine + A + H(+). Its pathway is cofactor biosynthesis; molybdopterin biosynthesis. Functionally, catalyzes the cyclization of GTP to (8S)-3',8-cyclo-7,8-dihydroguanosine 5'-triphosphate. The chain is GTP 3',8-cyclase from Edwardsiella ictaluri (strain 93-146).